The primary structure comprises 126 residues: 14 kDa phosphohistidine phosphatase (126 aa).

Position 22 (Lys-22) interacts with substrate. His-54 serves as the catalytic Proton acceptor. 95–97 (SMG) contacts substrate.

The protein belongs to the janus family. Monomer.

It is found in the cytoplasm. It carries out the reaction N(pros)-phospho-L-histidyl-[protein] + H2O = L-histidyl-[protein] + phosphate. The enzyme catalyses N(tele)-phospho-L-histidyl-[protein] + H2O = L-histidyl-[protein] + phosphate. Its function is as follows. Exhibits phosphohistidine phosphatase activity. The sequence is that of 14 kDa phosphohistidine phosphatase (PHPT1) from Sus scrofa (Pig).